The sequence spans 396 residues: NADH-quinone oxidoreductase subunit D (396 aa).

This sequence belongs to the complex I 49 kDa subunit family. NDH-1 is composed of 14 different subunits. Subunits NuoB, C, D, E, F, and G constitute the peripheral sector of the complex.

The protein localises to the cell inner membrane. The enzyme catalyses a quinone + NADH + 5 H(+)(in) = a quinol + NAD(+) + 4 H(+)(out). Its function is as follows. NDH-1 shuttles electrons from NADH, via FMN and iron-sulfur (Fe-S) centers, to quinones in the respiratory chain. The immediate electron acceptor for the enzyme in this species is believed to be ubiquinone. Couples the redox reaction to proton translocation (for every two electrons transferred, four hydrogen ions are translocated across the cytoplasmic membrane), and thus conserves the redox energy in a proton gradient. The polypeptide is NADH-quinone oxidoreductase subunit D (Mesorhizobium japonicum (strain LMG 29417 / CECT 9101 / MAFF 303099) (Mesorhizobium loti (strain MAFF 303099))).